The sequence spans 382 residues: Queuine tRNA-ribosyltransferase (382 aa).

The active-site Proton acceptor is the D89. Residues 89 to 93 (DSGGF), D143, Q187, and G214 each bind substrate. The RNA binding stretch occupies residues 245 to 251 (GVGKPED). The active-site Nucleophile is the D264. The RNA binding; important for wobble base 34 recognition stretch occupies residues 269–273 (TRNAR). Zn(2+) is bound by residues C302, C304, C307, and H333.

It belongs to the queuine tRNA-ribosyltransferase family. Homodimer. Within each dimer, one monomer is responsible for RNA recognition and catalysis, while the other monomer binds to the replacement base PreQ1. Zn(2+) is required as a cofactor.

It catalyses the reaction 7-aminomethyl-7-carbaguanine + guanosine(34) in tRNA = 7-aminomethyl-7-carbaguanosine(34) in tRNA + guanine. It participates in tRNA modification; tRNA-queuosine biosynthesis. Catalyzes the base-exchange of a guanine (G) residue with the queuine precursor 7-aminomethyl-7-deazaguanine (PreQ1) at position 34 (anticodon wobble position) in tRNAs with GU(N) anticodons (tRNA-Asp, -Asn, -His and -Tyr). Catalysis occurs through a double-displacement mechanism. The nucleophile active site attacks the C1' of nucleotide 34 to detach the guanine base from the RNA, forming a covalent enzyme-RNA intermediate. The proton acceptor active site deprotonates the incoming PreQ1, allowing a nucleophilic attack on the C1' of the ribose to form the product. After dissociation, two additional enzymatic reactions on the tRNA convert PreQ1 to queuine (Q), resulting in the hypermodified nucleoside queuosine (7-(((4,5-cis-dihydroxy-2-cyclopenten-1-yl)amino)methyl)-7-deazaguanosine). The polypeptide is Queuine tRNA-ribosyltransferase (Sodalis glossinidius (strain morsitans)).